The primary structure comprises 59 residues: Small integral membrane protein 30 (59 aa).

An N-terminal signal peptide occupies residues 1–24 (MTSVSTQLSLVLMSLLLVLPVVEA). At 25–29 (VEAGD) the chain is on the extracellular side. Residues 30-50 (AIALLLGVVLSITGICACLGV) traverse the membrane as a helical segment. The Cytoplasmic segment spans residues 51-59 (YARKRNGQM).

In terms of assembly, interacts (via transmembrane domain) with antiviral protein MAVS (via transmembrane domain); the interaction disrupts MAVS interaction with RIGI and inhibits MAVS aggregation, resulting in the repression of type I interferon signaling and innate immune responses.

The protein localises to the endoplasmic reticulum membrane. The protein resides in the mitochondrion membrane. Its function is as follows. Negatively regulates antiviral innate immune responses. Disrupts the interaction of antiviral protein MAVS with innate immune receptor RIGI and inhibits MAVS aggregation, resulting in the repression of type I interferon signaling and innate immune responses. This chain is Small integral membrane protein 30, found in Homo sapiens (Human).